We begin with the raw amino-acid sequence, 217 residues long: Probable GTP-binding protein EngB (217 aa).

In terms of domain architecture, EngB-type G spans 27 to 201; sequence GGVEIAFAGR…AQTLSGWYLA (175 aa). GTP is bound by residues 35 to 42, 62 to 66, 80 to 83, 147 to 150, and 180 to 182; these read GRSNAGKS, GRTQL, DLPG, TKAD, and FSS. Mg(2+)-binding residues include Ser42 and Thr64.

Belongs to the TRAFAC class TrmE-Era-EngA-EngB-Septin-like GTPase superfamily. EngB GTPase family. Requires Mg(2+) as cofactor.

In terms of biological role, necessary for normal cell division and for the maintenance of normal septation. In Aeromonas salmonicida (strain A449), this protein is Probable GTP-binding protein EngB.